A 257-amino-acid chain; its full sequence is MAGHTRKWAKVKRKKQKDDRRKSKVWARLSQEIEKAAREGGGDPDANVALSQALERAREEDMAKDTIERAIKRGTGELEEEGREKVTYEGYAPHGVAVFVEGETENINRTVKDLRNLFSDHGGNLGKDGSVAYLFEQKGRFEIAADATDEMTLFEVAVEAGAEEVDETDGTYVVTTGRDAFADVGEALDEAGLPVEANALVRAPTTTVALAPDERDAVRGLIEKINDLRDVTSVYTTLEIDGTPLALGVDVASPAGH.

Residues 1-15 (MAGHTRKWAKVKRKK) show a composition bias toward basic residues. Residues 1 to 25 (MAGHTRKWAKVKRKKQKDDRRKSKV) form a disordered region.

This sequence belongs to the TACO1 family.

It is found in the cytoplasm. The polypeptide is Probable transcriptional regulatory protein SRU_2667 (Salinibacter ruber (strain DSM 13855 / M31)).